The sequence spans 254 residues: 3-deoxy-manno-octulosonate cytidylyltransferase (254 aa).

It belongs to the KdsB family.

The protein resides in the cytoplasm. The enzyme catalyses 3-deoxy-alpha-D-manno-oct-2-ulosonate + CTP = CMP-3-deoxy-beta-D-manno-octulosonate + diphosphate. The protein operates within nucleotide-sugar biosynthesis; CMP-3-deoxy-D-manno-octulosonate biosynthesis; CMP-3-deoxy-D-manno-octulosonate from 3-deoxy-D-manno-octulosonate and CTP: step 1/1. Its pathway is bacterial outer membrane biogenesis; lipopolysaccharide biosynthesis. Its function is as follows. Activates KDO (a required 8-carbon sugar) for incorporation into bacterial lipopolysaccharide in Gram-negative bacteria. The chain is 3-deoxy-manno-octulosonate cytidylyltransferase from Chlamydia trachomatis serovar L2 (strain ATCC VR-902B / DSM 19102 / 434/Bu).